The sequence spans 491 residues: MANYFNTLNLRQQLAQLGKCRFMGRDEFADGASYLQGKKVVIVGCGAQGLNQGLNMRDSGLDISYALRKEAIAEKRASWRKATENGFKVGTYEELIPQADLVVNLTPDKQHSDVVRTVQPLMKDGAALGYSHGFNIVEVGEQIRKDITVVMVAPKCPGTEVREEYKRGFGVPTLIAVHPENDPKGEGMAIAKAWAAATGGHRAGVLESSFVAEVKSDLMGEQTILCGMLQAGSLLCFDKLVEEGTDPAYAEKLIQFGWETITEALKQGGITLMMDRLSNPAKLRAYALSEQLKEIMAPLFQKHMDDIISGEFSSGMMADWTNDDKKLLTWREETGKTAFETAPQYEGKIGEQEYFDKGVLMIAMVKAGVELAFETMVDSGIIEESAYYESLHELPLIANTIARKRLYEMNVVISDTAEYGNYLFSYACVPLLKPFMAELQPGDLGKAIPEGAVDNAQLRDVNEAIRSHAIEQVGKKLRGYMTDMKRIAVAG.

The KARI N-terminal Rossmann domain maps to 15–208 (AQLGKCRFMG…GGHRAGVLES (194 aa)). NADP(+) contacts are provided by residues 45-48 (CGAQ), R68, R76, S78, and 108-110 (DKQ). The active site involves H132. G158 contributes to the NADP(+) binding site. KARI C-terminal knotted domains lie at 209-344 (SFVA…TAPQ) and 345-484 (YEGK…MTDM). Residues D217, E221, E389, and E393 each contribute to the Mg(2+) site. S414 contributes to the substrate binding site.

It belongs to the ketol-acid reductoisomerase family. Requires Mg(2+) as cofactor.

The enzyme catalyses (2R)-2,3-dihydroxy-3-methylbutanoate + NADP(+) = (2S)-2-acetolactate + NADPH + H(+). It catalyses the reaction (2R,3R)-2,3-dihydroxy-3-methylpentanoate + NADP(+) = (S)-2-ethyl-2-hydroxy-3-oxobutanoate + NADPH + H(+). It participates in amino-acid biosynthesis; L-isoleucine biosynthesis; L-isoleucine from 2-oxobutanoate: step 2/4. Its pathway is amino-acid biosynthesis; L-valine biosynthesis; L-valine from pyruvate: step 2/4. In terms of biological role, involved in the biosynthesis of branched-chain amino acids (BCAA). Catalyzes an alkyl-migration followed by a ketol-acid reduction of (S)-2-acetolactate (S2AL) to yield (R)-2,3-dihydroxy-isovalerate. In the isomerase reaction, S2AL is rearranged via a Mg-dependent methyl migration to produce 3-hydroxy-3-methyl-2-ketobutyrate (HMKB). In the reductase reaction, this 2-ketoacid undergoes a metal-dependent reduction by NADPH to yield (R)-2,3-dihydroxy-isovalerate. The chain is Ketol-acid reductoisomerase (NADP(+)) from Escherichia coli (strain 55989 / EAEC).